A 470-amino-acid chain; its full sequence is Neuraminidase (470 aa).

Residues 1-14 lie on the Intravirion side of the membrane; that stretch reads MNPNQKIITIGSIS. An involved in apical transport and lipid raft association region spans residues 11-32; the sequence is GSISLGLVVFNVLLHVVSIIVT. A helical membrane pass occupies residues 15 to 35; sequence LGLVVFNVLLHVVSIIVTVLV. The interval 32–86 is hypervariable stalk region; the sequence is TVLVLGKGGNNGICNETVVREYNETVRIEKVTQWHNTNVVEYVPYWNGGTYMNNT. Over 36 to 470 the chain is Virion surface; it reads LGKGGNNGIC…AILPFDIDKM (435 aa). Residues N46, N54, and N84 are each glycosylated (N-linked (GlcNAc...) asparagine; by host). The head of neuraminidase stretch occupies residues 89 to 470; sequence ICDAKGFAPF…AILPFDIDKM (382 aa). 8 disulfides stabilise this stretch: C90-C417, C122-C127, C182-C229, C231-C236, C277-C290, C279-C288, C316-C335, and C421-C446. R116 serves as a coordination point for substrate. Residue N144 is glycosylated (N-linked (GlcNAc...) asparagine; by host). D149 (proton donor/acceptor) is an active-site residue. R150 provides a ligand contact to substrate. 275–276 provides a ligand contact to substrate; the sequence is EE. R291 provides a ligand contact to substrate. The Ca(2+) site is built by D292, G296, and D322. R368 contacts substrate. N-linked (GlcNAc...) asparagine; by host glycosylation occurs at N398. The Nucleophile role is filled by Y402.

Belongs to the glycosyl hydrolase 34 family. Homotetramer. Requires Ca(2+) as cofactor. In terms of processing, N-glycosylated.

It localises to the virion membrane. Its subcellular location is the host apical cell membrane. The catalysed reaction is Hydrolysis of alpha-(2-&gt;3)-, alpha-(2-&gt;6)-, alpha-(2-&gt;8)- glycosidic linkages of terminal sialic acid residues in oligosaccharides, glycoproteins, glycolipids, colominic acid and synthetic substrates.. Inhibited by the neuraminidase inhibitors zanamivir (Relenza) and oseltamivir (Tamiflu). These drugs interfere with the release of progeny virus from infected cells and are effective against all influenza strains. Resistance to neuraminidase inhibitors is quite rare. In terms of biological role, catalyzes the removal of terminal sialic acid residues from viral and cellular glycoconjugates. Cleaves off the terminal sialic acids on the glycosylated HA during virus budding to facilitate virus release. Additionally helps virus spread through the circulation by further removing sialic acids from the cell surface. These cleavages prevent self-aggregation and ensure the efficient spread of the progeny virus from cell to cell. Otherwise, infection would be limited to one round of replication. Described as a receptor-destroying enzyme because it cleaves a terminal sialic acid from the cellular receptors. May facilitate viral invasion of the upper airways by cleaving the sialic acid moieties on the mucin of the airway epithelial cells. Likely to plays a role in the budding process through its association with lipid rafts during intracellular transport. May additionally display a raft-association independent effect on budding. Plays a role in the determination of host range restriction on replication and virulence. Sialidase activity in late endosome/lysosome traffic seems to enhance virus replication. The sequence is that of Neuraminidase from Influenza A virus (strain A/Duck/Ukraine/1/1963 H3N8).